Here is a 145-residue protein sequence, read N- to C-terminus: Cell division protein SepF (145 aa).

This sequence belongs to the SepF family. In terms of assembly, homodimer. Interacts with FtsZ.

It localises to the cytoplasm. In terms of biological role, cell division protein that is part of the divisome complex and is recruited early to the Z-ring. Probably stimulates Z-ring formation, perhaps through the cross-linking of FtsZ protofilaments. Its function overlaps with FtsA. The chain is Cell division protein SepF from Lactobacillus helveticus (strain DPC 4571).